Consider the following 127-residue polypeptide: PanD regulatory factor (127 aa).

Residues 1 to 127 (MKLTIIRLEK…TAQQGGWEKC (127 aa)) form the N-acetyltransferase domain. Interaction with PanD regions lie at residues 43–48 (RFNERL) and 66–76 (LRVREVTRRRG). CoA contacts are provided by residues 66–68 (LRV) and 72–79 (TRRRGVGQ).

It belongs to the PanZ/PanM family. In terms of assembly, interacts with PanD in the presence of CoA. Forms a heterooctameric complex composed of four PanD subunits and four PanZ subunits. Monomer in solution.

Activation of PanD processing occurs even at low CoA concentrations. In contrast, full inhibition of PanD catalytic activity only occurs at sufficiently high CoA concentrations. In terms of biological role, controls both the activation and catalytic activity of PanD in a coenzyme A (CoA)-dependent fashion. Binding of CoA or a derivative to PanZ leads to interaction with PanD, which promotes the processing and activation of pro-PanD, and subsequent substrate-mediated inhibition of the active form of PanD. Inhibition of PanD activity is probably the primary metabolic role of PanZ, allowing negative feedback regulation of pantothenate biosynthesis by CoA. The sequence is that of PanD regulatory factor from Escherichia coli (strain K12).